Reading from the N-terminus, the 256-residue chain is Ribosomal RNA small subunit methyltransferase A (256 aa).

Asparagine 12, leucine 14, glycine 39, glutamate 60, aspartate 85, and asparagine 103 together coordinate S-adenosyl-L-methionine.

This sequence belongs to the class I-like SAM-binding methyltransferase superfamily. rRNA adenine N(6)-methyltransferase family. RsmA subfamily.

Its subcellular location is the cytoplasm. The enzyme catalyses adenosine(1518)/adenosine(1519) in 16S rRNA + 4 S-adenosyl-L-methionine = N(6)-dimethyladenosine(1518)/N(6)-dimethyladenosine(1519) in 16S rRNA + 4 S-adenosyl-L-homocysteine + 4 H(+). Its function is as follows. Specifically dimethylates two adjacent adenosines (A1518 and A1519) in the loop of a conserved hairpin near the 3'-end of 16S rRNA in the 30S particle. May play a critical role in biogenesis of 30S subunits. The polypeptide is Ribosomal RNA small subunit methyltransferase A (Legionella pneumophila subsp. pneumophila (strain Philadelphia 1 / ATCC 33152 / DSM 7513)).